Here is a 300-residue protein sequence, read N- to C-terminus: ESX-5 secretion-associated protein EspG5 (300 aa).

The protein belongs to the EspG family. Interacts specifically with ESX-5-dependent PE/PPE proteins. Binds PPE33 and PPE18. Does not interact with EsxN. Monomer in solution.

The protein resides in the cytoplasm. Its function is as follows. Specific chaperone for cognate PE/PPE proteins. Plays an important role in preventing aggregation of PE/PPE dimers. Required for LipY and PE31/PPE18 secretion. This chain is ESX-5 secretion-associated protein EspG5, found in Mycobacterium marinum (strain ATCC BAA-535 / M).